Here is a 261-residue protein sequence, read N- to C-terminus: 3-deoxy-manno-octulosonate cytidylyltransferase (261 aa).

Belongs to the KdsB family.

It localises to the cytoplasm. It catalyses the reaction 3-deoxy-alpha-D-manno-oct-2-ulosonate + CTP = CMP-3-deoxy-beta-D-manno-octulosonate + diphosphate. The protein operates within nucleotide-sugar biosynthesis; CMP-3-deoxy-D-manno-octulosonate biosynthesis; CMP-3-deoxy-D-manno-octulosonate from 3-deoxy-D-manno-octulosonate and CTP: step 1/1. It participates in bacterial outer membrane biogenesis; lipopolysaccharide biosynthesis. Its function is as follows. Activates KDO (a required 8-carbon sugar) for incorporation into bacterial lipopolysaccharide in Gram-negative bacteria. This chain is 3-deoxy-manno-octulosonate cytidylyltransferase, found in Marinobacter nauticus (strain ATCC 700491 / DSM 11845 / VT8) (Marinobacter aquaeolei).